We begin with the raw amino-acid sequence, 538 residues long: Putative cysteine ligase BshC (538 aa).

Residues 460–484 adopt a coiled-coil conformation; that stretch reads KINEQIELLERMLKRNVEKKHEVEL.

It belongs to the BshC family.

In terms of biological role, involved in bacillithiol (BSH) biosynthesis. May catalyze the last step of the pathway, the addition of cysteine to glucosamine malate (GlcN-Mal) to generate BSH. The protein is Putative cysteine ligase BshC of Bacillus cereus (strain AH820).